The primary structure comprises 836 residues: Zinc fingers and homeoboxes protein 2 (836 aa).

The interval methionine 1–valine 61 is disordered. Positions threonine 8–leucine 19 are enriched in polar residues. The interval alanine 27–glycine 77 is interaction with EFNB1. Residues glutamate 50–valine 61 show a composition bias toward basic and acidic residues. Lysine 64 participates in a covalent cross-link: Glycyl lysine isopeptide (Lys-Gly) (interchain with G-Cter in SUMO2). 2 C2H2-type zinc fingers span residues tyrosine 78–histidine 101 and tyrosine 110–histidine 133. A disordered region spans residues proline 164–glycine 214. Residues leucine 192–glycine 214 show a composition bias toward basic and acidic residues. A required for homodimerization region spans residues aspartate 195–serine 358. 4 DNA-binding regions (homeobox) span residues asparagine 263–glutamate 324, threonine 439–isoleucine 501, proline 530–valine 591, and serine 628–tryptophan 690. The required for repressor activity stretch occupies residues asparagine 263–lysine 446. Residues asparagine 263 to glycine 497 are required for interaction with NFYA. Residues histidine 317–lysine 446 form a required for nuclear localization region. Residues glycine 404 to serine 442 are disordered. A Glycyl lysine isopeptide (Lys-Gly) (interchain with G-Cter in SUMO2) cross-link involves residue lysine 455. Basic and acidic residues-rich tracts occupy residues methionine 699–serine 709, tyrosine 730–valine 746, and arginine 813–serine 824. The segment at methionine 699 to alanine 836 is disordered. 2 positions are modified to phosphoserine: serine 824 and serine 826.

This sequence belongs to the ZHX family. As to quaternary structure, homodimer (via homeobox domain 1). Heterodimer with ZHX1 (via homeobox domain 1). Heterodimer with ZHX3 (via homeobox domain 1). Heterodimerization with ZHX1 is not necessary for repressor activity. Interacts (via homeobox domain) with NFYA (via N-terminus). Interacts with EFNB1 intracellular domain peptide; the interaction enhances ZHX2 transcriptional repression activity. Expressed in retina where it localizes to Muller glial cells of the inner nuclear layer (at protein level). Detected in heart, brain, spleen, lung, liver, skeletal muscle, kidney and testis.

Its subcellular location is the nucleus. Functionally, acts as a transcriptional repressor. Represses the promoter activity of the CDC25C gene stimulated by NFYA. May play a role in retinal development where it regulates the composition of bipolar cell populations, by promoting differentiation of bipolar OFF-type cells. In the brain, may promote maintenance and suppress differentiation of neural progenitor cells in the developing cortex. The chain is Zinc fingers and homeoboxes protein 2 (Zhx2) from Mus musculus (Mouse).